The chain runs to 397 residues: MSDTLLNPYFGEFGGMYVPEILVPVLKQLEQAFVEAQNDPTFQAEFADLLKNYAGRPTALTLCRNLTKCTKTKLYLKREDLLHGGAHKTNQVLGQILLAKRMGKTRIIAETGAGQHGVATALACAMLDMPCRVYMGAKDVERQSPNVFRMRLMGAEVIPVEKGSCSLKDACCEAMRDWSANYETTHYLLGTAAGPHPFPTIVREFQKMIGEETKRQILEREGRLPDAVIAAVGGGSNAIGMFTDFIDEPNVRLIGVEPAGKGIESGEHGAPLGHAKVGIYFGMKSPLMQTEDGQVEESYSVSAGLDFPSVGPQHAYLNEIGRADYVSITDEEALNAFQELAKHEGIIPALESSHALAYALKLIKQNPEKEQLLVVNLSGRGDKDIFTVDKILNGGTN.

Position 88 is an N6-(pyridoxal phosphate)lysine (Lys88).

This sequence belongs to the TrpB family. In terms of assembly, tetramer of two alpha and two beta chains. The cofactor is pyridoxal 5'-phosphate.

The enzyme catalyses (1S,2R)-1-C-(indol-3-yl)glycerol 3-phosphate + L-serine = D-glyceraldehyde 3-phosphate + L-tryptophan + H2O. Its pathway is amino-acid biosynthesis; L-tryptophan biosynthesis; L-tryptophan from chorismate: step 5/5. Functionally, the beta subunit is responsible for the synthesis of L-tryptophan from indole and L-serine. The polypeptide is Tryptophan synthase beta chain (Haemophilus influenzae (strain 86-028NP)).